We begin with the raw amino-acid sequence, 165 residues long: Probable DNA polymerase III subunit chi (165 aa).

It belongs to the DNA polymerase III chi/HolC chain family. As to quaternary structure, DNA polymerase III contains a core (composed of alpha, epsilon and theta chains) that associates with a tau subunit. This core dimerizes to form the POLIII' complex. PolIII' associates with the gamma complex (composed of gamma, delta, delta', psi and chi chains) and with the beta chain to form the complete DNA polymerase III complex. Interacts directly with the psi subunit (holD). The only subunit of the DNA polymerase III holoenzyme known to interact with single-stranded DNA binding protein (SSB).

It catalyses the reaction DNA(n) + a 2'-deoxyribonucleoside 5'-triphosphate = DNA(n+1) + diphosphate. Part of the beta sliding clamp loading complex, which hydrolyzes ATP to load the beta clamp onto primed DNA to form the DNA replication pre-initiation complex. DNA polymerase III is a complex, multichain enzyme responsible for most of the replicative synthesis in bacteria. This DNA polymerase also exhibits 3' to 5' exonuclease activity. The sequence is that of Probable DNA polymerase III subunit chi from Rickettsia prowazekii (strain Madrid E).